Here is a 106-residue protein sequence, read N- to C-terminus: 3-phenylpropionate/cinnamic acid dioxygenase ferredoxin subunit (106 aa).

Positions 4 to 99 (IYACPVADVP…VHVEGGDIFI (96 aa)) constitute a Rieske domain. Residues C42, H44, C62, and H65 each coordinate [2Fe-2S] cluster.

Belongs to the bacterial ring-hydroxylating dioxygenase ferredoxin component family. In terms of assembly, this dioxygenase system consists of four proteins: the two subunits of the hydroxylase component (HcaE and HcaF), a ferredoxin (HcaC) and a ferredoxin reductase (HcaD). Requires [2Fe-2S] cluster as cofactor.

It participates in aromatic compound metabolism; 3-phenylpropanoate degradation. Part of the multicomponent 3-phenylpropionate dioxygenase, that converts 3-phenylpropionic acid (PP) and cinnamic acid (CI) into 3-phenylpropionate-dihydrodiol (PP-dihydrodiol) and cinnamic acid-dihydrodiol (CI-dihydrodiol), respectively. This protein seems to be a 2Fe-2S ferredoxin. This is 3-phenylpropionate/cinnamic acid dioxygenase ferredoxin subunit from Shigella flexneri serotype 5b (strain 8401).